A 180-amino-acid chain; its full sequence is NAD(P)H-quinone oxidoreductase subunit J (180 aa).

Positions 1 to 16 (MNEETQTSELTNTDQG) are enriched in polar residues. The segment at 1–23 (MNEETQTSELTNTDQGPQIEPGP) is disordered.

Belongs to the complex I 30 kDa subunit family. As to quaternary structure, NDH-1 can be composed of about 15 different subunits; different subcomplexes with different compositions have been identified which probably have different functions.

The protein resides in the cellular thylakoid membrane. It catalyses the reaction a plastoquinone + NADH + (n+1) H(+)(in) = a plastoquinol + NAD(+) + n H(+)(out). The enzyme catalyses a plastoquinone + NADPH + (n+1) H(+)(in) = a plastoquinol + NADP(+) + n H(+)(out). Its function is as follows. NDH-1 shuttles electrons from an unknown electron donor, via FMN and iron-sulfur (Fe-S) centers, to quinones in the respiratory and/or the photosynthetic chain. The immediate electron acceptor for the enzyme in this species is believed to be plastoquinone. Couples the redox reaction to proton translocation, and thus conserves the redox energy in a proton gradient. Cyanobacterial NDH-1 also plays a role in inorganic carbon-concentration. This Prochlorococcus marinus (strain MIT 9211) protein is NAD(P)H-quinone oxidoreductase subunit J.